Reading from the N-terminus, the 92-residue chain is MKTLLLTLVVVTIVCLDLGYTRRCFTTPSVRSERCPPGQEVCYTKTWTDGHGGSRGKRVDLGCAATCPTPKKKDIKTICCSKDNCNTFPKWP.

Positions 1–21 (MKTLLLTLVVVTIVCLDLGYT) are cleaved as a signal peptide. Cystine bridges form between Cys24–Cys42, Cys35–Cys63, Cys67–Cys79, and Cys80–Cys85.

The protein belongs to the three-finger toxin family. Long-chain subfamily. Type II alpha-neurotoxin sub-subfamily. As to expression, expressed by the venom gland.

The protein localises to the secreted. Functionally, binds with high affinity to muscular (alpha-1/CHRNA1) and neuronal (alpha-7/CHRNA7) nicotinic acetylcholine receptor (nAChR) and inhibits acetylcholine from binding to the receptor, thereby impairing neuromuscular and neuronal transmission. In Oxyuranus microlepidotus (Inland taipan), this protein is Long neurotoxin 3FTx-Oxy2.